A 796-amino-acid polypeptide reads, in one-letter code: Volume-regulated anion channel subunit LRRC8E (796 aa).

The Cytoplasmic portion of the chain corresponds to 1 to 22 (MIPVAEFKQFTEQQPAFKVLKP). The chain crosses the membrane as a helical span at residues 23-43 (WWDVLAEYLTVAMLMIGVFGC). The Extracellular segment spans residues 44–116 (TLQVTQDKII…YETALHWYAK (73 aa)). Cys54 and Cys301 are oxidised to a cystine. A glycan (N-linked (GlcNAc...) asparagine) is linked at Asn63. The helical transmembrane segment at 117–137 (YFPYLVVIHTLIFMVCTSFWF) threads the bilayer. Over 138–265 (KFPGTSSKIE…IRQTVLKVCK (128 aa)) the chain is Cytoplasmic. A helical membrane pass occupies residues 266-286 (FLAILVYNLVYVEKISFLVAC). Topologically, residues 287–313 (RVETSEVTGYASFCCNHTKAHLFSKLA) are extracellular. A glycan (N-linked (GlcNAc...) asparagine) is linked at Asn302. The helical transmembrane segment at 314–334 (FCYISFVCIYGLTCIYTLYWL) threads the bilayer. The Cytoplasmic portion of the chain corresponds to 335–796 (FHRPLKEYSF…AEVRDKMEEE (462 aa)). LRR repeat units follow at residues 508–529 (GLEE…ATLE), 536–557 (QLKV…TDVA), 559–579 (HLQR…NSLK), 583–604 (ALRE…VFSL), 606–627 (ALQE…LSFQ), 631–652 (KLVT…VRKL), 654–675 (SLEQ…LGLC), 677–698 (GLRL…VGLL), 700–721 (NLQH…LFFC), 723–744 (KLRT…VGAL), and 746–767 (ALSR…LGNC).

This sequence belongs to the LRRC8 family. As to quaternary structure, heterohexamer; oligomerizes with other LRRC8 proteins (LRRC8A, LRRC8C, LRRC8D and/or LRRC8B) to form a heterohexamer. In vivo, the subunit composition may depend primarily on expression levels, and heterooligomeric channels containing various proportions of the different LRRC8 proteins may coexist.

It localises to the cell membrane. The protein localises to the endoplasmic reticulum membrane. It is found in the lysosome membrane. The catalysed reaction is chloride(in) = chloride(out). It catalyses the reaction iodide(out) = iodide(in). It carries out the reaction taurine(out) = taurine(in). The enzyme catalyses 2',3'-cGAMP(out) = 2',3'-cGAMP(in). Functionally, non-essential component of the volume-regulated anion channel (VRAC, also named VSOAC channel), an anion channel required to maintain a constant cell volume in response to extracellular or intracellular osmotic changes. The VRAC channel conducts iodide better than chloride and can also conduct organic osmolytes like taurine. Mediates efflux of amino acids, such as aspartate, in response to osmotic stress. The VRAC channel also mediates transport of immunoreactive cyclic dinucleotide GMP-AMP (2'-3'-cGAMP), an immune messenger produced in response to DNA virus in the cytosol. Channel activity requires LRRC8A plus at least one other family member (LRRC8B, LRRC8C, LRRC8D or LRRC8E); channel characteristics depend on the precise subunit composition. Also plays a role in lysosome homeostasis by forming functional lysosomal VRAC channels in response to low cytoplasmic ionic strength condition: lysosomal VRAC channels are necessary for the formation of large lysosome-derived vacuoles, which store and then expel excess water to maintain cytosolic water homeostasis. In Homo sapiens (Human), this protein is Volume-regulated anion channel subunit LRRC8E.